The sequence spans 1093 residues: Regulator of nonsense transcripts 1 homolog (1093 aa).

The disordered stretch occupies residues 42–79 (YGVYGGRGPRGNGRRRHDDDDNETEVLDDDDDESLASV). Residues 61–75 (DDNETEVLDDDDDES) are compositionally biased toward acidic residues. The 158-residue stretch at 95–252 (EKELPPHACA…AKLEEMWKEA (158 aa)) folds into the Upf1 CH-rich domain. The Zn(2+) site is built by Cys103, Cys106, Cys117, Cys120, Cys125, His135, His139, His145, Cys163, Cys166, Cys189, and Cys193. Positions 103 to 135 (CAYCGIHSPSSVVKCLTCNKWFCSAKGSAFSSH) are C3H. The tract at residues 117–145 (CLTCNKWFCSAKGSAFSSHIVNHLVRARH) is CC/SHH/C. The interval 163-193 (CYNCGTKNVFILGFIPAKSDTVVVLLCRQPC) is C4. ATP is bound by residues Gln460, 480-484 (GTGKT), Gln650, Tyr687, and Glu818.

Belongs to the DNA2/NAM7 helicase family.

It localises to the cytoplasm. The catalysed reaction is ATP + H2O = ADP + phosphate + H(+). In terms of biological role, RNA-dependent helicase required for nonsense-mediated decay (NMD) of aberrant mRNAs containing premature stop codons and modulates the expression level of normal mRNAs. Also capable of unwinding double-stranded DNA and translocating on single-stranded DNA. The protein is Regulator of nonsense transcripts 1 homolog of Neurospora crassa (strain ATCC 24698 / 74-OR23-1A / CBS 708.71 / DSM 1257 / FGSC 987).